The sequence spans 466 residues: 3-isopropylmalate dehydratase large subunit (466 aa).

[4Fe-4S] cluster-binding residues include Cys-347, Cys-407, and Cys-410.

It belongs to the aconitase/IPM isomerase family. LeuC type 1 subfamily. In terms of assembly, heterodimer of LeuC and LeuD. [4Fe-4S] cluster serves as cofactor.

The enzyme catalyses (2R,3S)-3-isopropylmalate = (2S)-2-isopropylmalate. It functions in the pathway amino-acid biosynthesis; L-leucine biosynthesis; L-leucine from 3-methyl-2-oxobutanoate: step 2/4. Catalyzes the isomerization between 2-isopropylmalate and 3-isopropylmalate, via the formation of 2-isopropylmaleate. This Cronobacter sakazakii (strain ATCC BAA-894) (Enterobacter sakazakii) protein is 3-isopropylmalate dehydratase large subunit.